The following is a 461-amino-acid chain: 3-oxoacyl-[acyl-carrier-protein] synthase, mitochondrial (461 aa).

The transit peptide at 1 to 28 directs the protein to the mitochondrion; the sequence is MATSNLRRHLSASRLRLNRFISTSSSYH. Residues 30–460 enclose the Ketosynthase family 3 (KS3) domain; sequence HRRVVVTGLG…GTNASLLFAS (431 aa). Catalysis depends on for beta-ketoacyl synthase activity residues Cys209, His350, and His389.

Belongs to the thiolase-like superfamily. Beta-ketoacyl-ACP synthases family. As to quaternary structure, homodimer. As to expression, expressed at the same level in leaves, roots, siliques and flowers.

It localises to the mitochondrion. The enzyme catalyses a fatty acyl-[ACP] + malonyl-[ACP] + H(+) = a 3-oxoacyl-[ACP] + holo-[ACP] + CO2. The catalysed reaction is butanoyl-[ACP] + malonyl-[ACP] + H(+) = 3-oxohexanoyl-[ACP] + holo-[ACP] + CO2. It catalyses the reaction hexanoyl-[ACP] + malonyl-[ACP] + H(+) = 3-oxooctanoyl-[ACP] + holo-[ACP] + CO2. It carries out the reaction octanoyl-[ACP] + malonyl-[ACP] + H(+) = 3-oxodecanoyl-[ACP] + holo-[ACP] + CO2. The enzyme catalyses decanoyl-[ACP] + malonyl-[ACP] + H(+) = 3-oxododecanoyl-[ACP] + holo-[ACP] + CO2. The catalysed reaction is dodecanoyl-[ACP] + malonyl-[ACP] + H(+) = 3-oxotetradecanoyl-[ACP] + holo-[ACP] + CO2. It catalyses the reaction tetradecanoyl-[ACP] + malonyl-[ACP] + H(+) = 3-oxohexadecanoyl-[ACP] + holo-[ACP] + CO2. It carries out the reaction hexadecanoyl-[ACP] + malonyl-[ACP] + H(+) = 3-oxooctadecanoyl-[ACP] + holo-[ACP] + CO2. Its pathway is lipid metabolism; fatty acid biosynthesis. Inhibited by cerulenin. Functionally, catalyzes all the condensation reaction of fatty acid synthesis by the addition to an acyl acceptor of two carbons from malonyl-ACP. Able to elongate saturated acyl chains from 4 to at least 16 carbons. Uses malonyl-CoA but not acetyl-CoA as primer substrate. When expressed in a heterologous system, reveals a bimodal distribution of products, with peaks at C8 and C14-C16. The major product of the reaction (octanoyl-ACP) is required for the lipoylation of essential mitochondrial proteins. Required for mitochondrial fatty acid synthesis (mtFAS). MtFAS are essential for photorespiration and plant development, probably by influencing mitochondrial membrane lipid composition and other lipid metabolic pathways. In Arabidopsis thaliana (Mouse-ear cress), this protein is 3-oxoacyl-[acyl-carrier-protein] synthase, mitochondrial.